Consider the following 453-residue polypeptide: Asparagine--tRNA ligase (453 aa).

Belongs to the class-II aminoacyl-tRNA synthetase family. Homodimer.

It localises to the cytoplasm. It catalyses the reaction tRNA(Asn) + L-asparagine + ATP = L-asparaginyl-tRNA(Asn) + AMP + diphosphate + H(+). In Malacoplasma penetrans (strain HF-2) (Mycoplasma penetrans), this protein is Asparagine--tRNA ligase.